The chain runs to 68 residues: Beta-defensin 1 (68 aa).

Residues 1–21 (MRTSYLLLFTLCLLLSEMASG) form the signal peptide. Residues 22 to 32 (GNFLTGLGHRS) constitute a propeptide that is removed on maturation. 3 cysteine pairs are disulfide-bonded: cysteine 37/cysteine 66, cysteine 44/cysteine 59, and cysteine 49/cysteine 67.

This sequence belongs to the beta-defensin family. As to quaternary structure, monomer. Homodimer.

The protein localises to the secreted. The protein resides in the membrane. Its function is as follows. Has bactericidal activity. May act as a ligand for C-C chemokine receptor CCR6. Positively regulates the sperm motility and bactericidal activity in a CCR6-dependent manner. Binds to CCR6 and triggers Ca2+ mobilization in the sperm which is important for its motility. This is Beta-defensin 1 (DEFB1) from Pan troglodytes (Chimpanzee).